The following is a 40-amino-acid chain: Large ribosomal subunit protein bL36B (40 aa).

It belongs to the bacterial ribosomal protein bL36 family.

This chain is Large ribosomal subunit protein bL36B, found in Leifsonia xyli subsp. xyli (strain CTCB07).